The sequence spans 239 residues: 1-(5-phosphoribosyl)-5-[(5-phosphoribosylamino)methylideneamino] imidazole-4-carboxamide isomerase (239 aa).

Asp-8 acts as the Proton acceptor in catalysis. Asp-129 (proton donor) is an active-site residue.

It belongs to the HisA/HisF family.

It is found in the cytoplasm. It catalyses the reaction 1-(5-phospho-beta-D-ribosyl)-5-[(5-phospho-beta-D-ribosylamino)methylideneamino]imidazole-4-carboxamide = 5-[(5-phospho-1-deoxy-D-ribulos-1-ylimino)methylamino]-1-(5-phospho-beta-D-ribosyl)imidazole-4-carboxamide. It functions in the pathway amino-acid biosynthesis; L-histidine biosynthesis; L-histidine from 5-phospho-alpha-D-ribose 1-diphosphate: step 4/9. This chain is 1-(5-phosphoribosyl)-5-[(5-phosphoribosylamino)methylideneamino] imidazole-4-carboxamide isomerase, found in Legionella pneumophila subsp. pneumophila (strain Philadelphia 1 / ATCC 33152 / DSM 7513).